The sequence spans 430 residues: Serine hydroxymethyltransferase (430 aa).

Residue glycine 120–isoleucine 122 participates in (6S)-5,6,7,8-tetrahydrofolate binding. At lysine 226 the chain carries N6-(pyridoxal phosphate)lysine.

This sequence belongs to the SHMT family. In terms of assembly, homodimer. It depends on pyridoxal 5'-phosphate as a cofactor.

The protein resides in the cytoplasm. It participates in amino-acid biosynthesis; glycine biosynthesis; glycine from L-serine: step 1/1. Its function is as follows. Catalyzes the reversible interconversion of serine and glycine with a modified folate serving as the one-carbon carrier. Also exhibits a pteridine-independent aldolase activity toward beta-hydroxyamino acids, producing glycine and aldehydes, via a retro-aldol mechanism. The protein is Serine hydroxymethyltransferase of Pyrobaculum aerophilum (strain ATCC 51768 / DSM 7523 / JCM 9630 / CIP 104966 / NBRC 100827 / IM2).